Here is a 131-residue protein sequence, read N- to C-terminus: MIFVDTSFWAALGNAGDARHGTAKRLWASKPPVVMTSNHVLGETWTLLNRRCGHRAAVAAAAIRLSTVVRVEHVTADLEEQAWEWLVRHDEREYSFVDATSFAVMRKKGIQNAYAFDGDFSAAGFVEVRPE.

Residues 2-125 (IFVDTSFWAA…FDGDFSAAGF (124 aa)) enclose the PINc domain. Aspartate 5 and aspartate 98 together coordinate Mg(2+).

It belongs to the PINc/VapC protein family. It depends on Mg(2+) as a cofactor.

Functionally, toxic component of a type II toxin-antitoxin (TA) system. An endoribonuclease that cleaves 23S rRNA in the sarcin-ricin loop (SRL). The SRL sequence is highly conserved and is implicated in GTP hydrolysis by EF-Tu and EF-G. Acts on purified ribosomes but not on isolated RNA. Its toxic effect is neutralized by coexpression with cognate antitoxin VapB20. The chain is 23S rRNA-specific endonuclease VapC20 (vapC20) from Mycobacterium tuberculosis (strain CDC 1551 / Oshkosh).